Here is a 331-residue protein sequence, read N- to C-terminus: Ketol-acid reductoisomerase (NADP(+)) (331 aa).

The KARI N-terminal Rossmann domain occupies 2–182; the sequence is ARMYYDEDAN…GGTRAGVLET (181 aa). NADP(+)-binding positions include 25 to 28, Ser-51, Ser-53, and 83 to 86; these read YGSQ and DEVQ. The active site involves His-108. Residue Gly-134 coordinates NADP(+). The region spanning 183 to 328 is the KARI C-terminal knotted domain; it reads TFREETETDL…KDLRAMFSWL (146 aa). 4 residues coordinate Mg(2+): Asp-191, Glu-195, Glu-227, and Glu-231. Ser-252 provides a ligand contact to substrate.

The protein belongs to the ketol-acid reductoisomerase family. Requires Mg(2+) as cofactor.

It catalyses the reaction (2R)-2,3-dihydroxy-3-methylbutanoate + NADP(+) = (2S)-2-acetolactate + NADPH + H(+). The enzyme catalyses (2R,3R)-2,3-dihydroxy-3-methylpentanoate + NADP(+) = (S)-2-ethyl-2-hydroxy-3-oxobutanoate + NADPH + H(+). The protein operates within amino-acid biosynthesis; L-isoleucine biosynthesis; L-isoleucine from 2-oxobutanoate: step 2/4. It participates in amino-acid biosynthesis; L-valine biosynthesis; L-valine from pyruvate: step 2/4. Functionally, involved in the biosynthesis of branched-chain amino acids (BCAA). Catalyzes an alkyl-migration followed by a ketol-acid reduction of (S)-2-acetolactate (S2AL) to yield (R)-2,3-dihydroxy-isovalerate. In the isomerase reaction, S2AL is rearranged via a Mg-dependent methyl migration to produce 3-hydroxy-3-methyl-2-ketobutyrate (HMKB). In the reductase reaction, this 2-ketoacid undergoes a metal-dependent reduction by NADPH to yield (R)-2,3-dihydroxy-isovalerate. The polypeptide is Ketol-acid reductoisomerase (NADP(+)) (Nostoc punctiforme (strain ATCC 29133 / PCC 73102)).